A 214-amino-acid polypeptide reads, in one-letter code: ATP-dependent Clp protease proteolytic subunit (214 aa).

Catalysis depends on Ser-114, which acts as the Nucleophile. His-139 is an active-site residue.

This sequence belongs to the peptidase S14 family. Fourteen ClpP subunits assemble into 2 heptameric rings which stack back to back to give a disk-like structure with a central cavity, resembling the structure of eukaryotic proteasomes.

The protein resides in the cytoplasm. The catalysed reaction is Hydrolysis of proteins to small peptides in the presence of ATP and magnesium. alpha-casein is the usual test substrate. In the absence of ATP, only oligopeptides shorter than five residues are hydrolyzed (such as succinyl-Leu-Tyr-|-NHMec, and Leu-Tyr-Leu-|-Tyr-Trp, in which cleavage of the -Tyr-|-Leu- and -Tyr-|-Trp bonds also occurs).. Its function is as follows. Cleaves peptides in various proteins in a process that requires ATP hydrolysis. Has a chymotrypsin-like activity. Plays a major role in the degradation of misfolded proteins. This is ATP-dependent Clp protease proteolytic subunit from Nitrosomonas eutropha (strain DSM 101675 / C91 / Nm57).